Consider the following 470-residue polypeptide: Poly(A) polymerase catalytic subunit (470 aa).

Residues D192 and D194 contribute to the active site.

This sequence belongs to the poxviridae poly(A) polymerase catalytic subunit family. As to quaternary structure, heterodimer of a large (catalytic) subunit and a small (regulatory) subunit.

It carries out the reaction RNA(n) + ATP = RNA(n)-3'-adenine ribonucleotide + diphosphate. Polymerase that creates the 3'-poly(A) tail of mRNA's. The protein is Poly(A) polymerase catalytic subunit (PAPL) of Sus scrofa (Pig).